The chain runs to 162 residues: Large ribosomal subunit protein uL10 (162 aa).

It belongs to the universal ribosomal protein uL10 family. In terms of assembly, part of the ribosomal stalk of the 50S ribosomal subunit. The N-terminus interacts with L11 and the large rRNA to form the base of the stalk. The C-terminus forms an elongated spine to which L12 dimers bind in a sequential fashion forming a multimeric L10(L12)X complex.

Its function is as follows. Forms part of the ribosomal stalk, playing a central role in the interaction of the ribosome with GTP-bound translation factors. This is Large ribosomal subunit protein uL10 from Borrelia garinii subsp. bavariensis (strain ATCC BAA-2496 / DSM 23469 / PBi) (Borreliella bavariensis).